Here is a 255-residue protein sequence, read N- to C-terminus: 5'-nucleotidase SurE (255 aa).

4 residues coordinate a divalent metal cation: aspartate 8, aspartate 9, serine 40, and asparagine 93.

The protein belongs to the SurE nucleotidase family. Requires a divalent metal cation as cofactor.

It is found in the cytoplasm. It carries out the reaction a ribonucleoside 5'-phosphate + H2O = a ribonucleoside + phosphate. Its function is as follows. Nucleotidase that shows phosphatase activity on nucleoside 5'-monophosphates. In Azorhizobium caulinodans (strain ATCC 43989 / DSM 5975 / JCM 20966 / LMG 6465 / NBRC 14845 / NCIMB 13405 / ORS 571), this protein is 5'-nucleotidase SurE.